Reading from the N-terminus, the 953-residue chain is Lysosomal alpha-glucosidase (953 aa).

Residues Met1 to Leu27 form the signal peptide. Positions Gly28 to Gln69 are excised as a propeptide. The P-type domain occupies Thr80–Pro131. 3 disulfide bridges follow: Cys82–Cys109, Cys92–Cys108, and Cys103–Cys127. N-linked (GlcNAc...) asparagine glycosylation is found at Asn140, Asn233, and Asn390. A substrate-binding site is contributed by Asp404. Residue Asn470 is glycosylated (N-linked (GlcNAc...) asparagine). Asp518 acts as the Nucleophile in catalysis. The active site involves Glu521. An intrachain disulfide couples Cys533 to Cys558. Positions 600 and 616 each coordinate substrate. Residues Cys647 and Cys658 are joined by a disulfide bond. Residue Asn652 is glycosylated (N-linked (GlcNAc...) asparagine). His674 contacts substrate. Residues Asn883 and Asn926 are each glycosylated (N-linked (GlcNAc...) asparagine).

The protein belongs to the glycosyl hydrolase 31 family.

The protein resides in the lysosome. It localises to the lysosome membrane. The enzyme catalyses Hydrolysis of terminal, non-reducing (1-&gt;4)-linked alpha-D-glucose residues with release of alpha-D-glucose.. In terms of biological role, essential for the degradation of glycogen in lysosomes. Has highest activity on alpha-1,4-linked glycosidic linkages, but can also hydrolyze alpha-1,6-linked glucans. The sequence is that of Lysosomal alpha-glucosidase (Gaa) from Rattus norvegicus (Rat).